The following is a 307-amino-acid chain: N-acetylmuramic acid 6-phosphate etherase (307 aa).

An SIS domain is found at T59–K222. Catalysis depends on E87, which acts as the Proton donor. Residue E118 is part of the active site.

The protein belongs to the GCKR-like family. MurNAc-6-P etherase subfamily. In terms of assembly, homodimer.

It carries out the reaction N-acetyl-D-muramate 6-phosphate + H2O = N-acetyl-D-glucosamine 6-phosphate + (R)-lactate. It participates in amino-sugar metabolism; N-acetylmuramate degradation. Functionally, specifically catalyzes the cleavage of the D-lactyl ether substituent of MurNAc 6-phosphate, producing GlcNAc 6-phosphate and D-lactate. This is N-acetylmuramic acid 6-phosphate etherase from Trichormus variabilis (strain ATCC 29413 / PCC 7937) (Anabaena variabilis).